Reading from the N-terminus, the 316-residue chain is Acetyl-coenzyme A carboxylase carboxyl transferase subunit alpha (316 aa).

The CoA carboxyltransferase C-terminal domain maps to 40 to 293; that stretch reads LERRSKDALR…GETIENGFRE (254 aa).

It belongs to the AccA family. As to quaternary structure, acetyl-CoA carboxylase is a heterohexamer composed of biotin carboxyl carrier protein (AccB), biotin carboxylase (AccC) and two subunits each of ACCase subunit alpha (AccA) and ACCase subunit beta (AccD).

The protein resides in the cytoplasm. It catalyses the reaction N(6)-carboxybiotinyl-L-lysyl-[protein] + acetyl-CoA = N(6)-biotinyl-L-lysyl-[protein] + malonyl-CoA. It functions in the pathway lipid metabolism; malonyl-CoA biosynthesis; malonyl-CoA from acetyl-CoA: step 1/1. Component of the acetyl coenzyme A carboxylase (ACC) complex. First, biotin carboxylase catalyzes the carboxylation of biotin on its carrier protein (BCCP) and then the CO(2) group is transferred by the carboxyltransferase to acetyl-CoA to form malonyl-CoA. This chain is Acetyl-coenzyme A carboxylase carboxyl transferase subunit alpha, found in Chelativorans sp. (strain BNC1).